The primary structure comprises 356 residues: Protein pelota homolog (356 aa).

It belongs to the eukaryotic release factor 1 family. Pelota subfamily. As to quaternary structure, monomer. A divalent metal cation is required as a cofactor.

The protein localises to the cytoplasm. Functionally, may function in recognizing stalled ribosomes, interact with stem-loop structures in stalled mRNA molecules, and effect endonucleolytic cleavage of the mRNA. May play a role in the release non-functional ribosomes and degradation of damaged mRNAs. Has endoribonuclease activity. The sequence is that of Protein pelota homolog from Staphylothermus marinus (strain ATCC 43588 / DSM 3639 / JCM 9404 / F1).